The sequence spans 56 residues: Turripeptide XIV-01 (56 aa).

An N-terminal signal peptide occupies residues 1-21 (MRFHVLLTVALLLTSLMSIEA). A propeptide spanning residues 22–30 (KPVNGAEME) is cleaved from the precursor.

Post-translationally, contains 2 disulfide bonds. As to expression, expressed by the venom duct.

It is found in the secreted. This Gemmula speciosa (Splendid gem-turris) protein is Turripeptide XIV-01.